Consider the following 504-residue polypeptide: MTQTNGFDALHAHAQRLRGAAIPALLAAEPERPTQYAWQVGPLYFNFARQKYDRAALDALFAIARERDLAGAFQRLFRGEQVNVTEQRAALHTALRGDLTDAPVASECYATAAEVRERMGALIQQLEATDVTDIVSVGIGGSDLGPRLVADALRPVSGARLRVHFVSNVDGAAMQRTLATLDPARTAGILISKTFGTQETLLNGSILHAWLGGSERLYAVSANPERAAKAFDIAPGRVLPMWDWVGGRYSLWSAVGFPIALAIGFERFEQLLEGAAQFDAHALNTPLEENVAVLHGLTAVWNRNLLGSATHAVMTYDQRLALLPAYLQQLVMESLGKRVKLDGSAVDSDTVSVWWGGAGTDVQHSFFQALHQGTSVVPADFIGTVHNDDPYAENHVALMANVLAQTEALANGQDSSDPHRSYPGGRPSTVILLDALTPQALGALISMYEHSVYVQSVMWGINAFDQFGVELGKQLASQLLPALKGESADVADPVTRELLSKLRG.

Residue Glu-333 is the Proton donor of the active site. Catalysis depends on residues His-364 and Lys-473.

It belongs to the GPI family.

It localises to the cytoplasm. It carries out the reaction alpha-D-glucose 6-phosphate = beta-D-fructose 6-phosphate. The protein operates within carbohydrate biosynthesis; gluconeogenesis. It functions in the pathway carbohydrate degradation; glycolysis; D-glyceraldehyde 3-phosphate and glycerone phosphate from D-glucose: step 2/4. Catalyzes the reversible isomerization of glucose-6-phosphate to fructose-6-phosphate. The protein is Glucose-6-phosphate isomerase of Xanthomonas oryzae pv. oryzae (strain MAFF 311018).